A 139-amino-acid polypeptide reads, in one-letter code: ATP synthase epsilon chain (139 aa).

This sequence belongs to the ATPase epsilon chain family. In terms of assembly, F-type ATPases have 2 components, CF(1) - the catalytic core - and CF(0) - the membrane proton channel. CF(1) has five subunits: alpha(3), beta(3), gamma(1), delta(1), epsilon(1). CF(0) has three main subunits: a, b and c.

It is found in the cell inner membrane. Produces ATP from ADP in the presence of a proton gradient across the membrane. This chain is ATP synthase epsilon chain, found in Acinetobacter baumannii (strain SDF).